We begin with the raw amino-acid sequence, 566 residues long: ALBINO3-like protein 3, mitochondrial (566 aa).

A mitochondrion-targeting transit peptide spans 1-44 (MAFRRVLLSHLRRSHHTCSSLSPHHVSATTQPSIALALFQSRFF). 4 helical membrane passes run 139-159 (WVVIATSTVAFRTALLPILIL), 207-227 (LWVPAYFSIQISCFFLWITSI), 249-269 (LTEIPNGLYGPLFPFLIAGLH), and 301-321 (LLTCALYFLSFQMPQGSLLYW). TPR repeat units lie at residues 386–419 (PKELVALSAKYLSGGHKDKSIPLLRLALEKDPEY), 420–453 (LQAMIILGQALYQKDQFAEAAKCLEQAASKLLDT), 465–498 (IVASQWAGVSNIRQGKTSEGITHLERVANMKEPD), and 507–540 (LDALVLYSSAIFNEGRREEAAKYLRRVVAYDPSF). A disordered region spans residues 547-566 (CEEDDTIPTSSSSNSTSKTS). Positions 555–566 (TSSSSNSTSKTS) are enriched in low complexity.

This sequence belongs to the OXA1/ALB3/YidC (TC 2.A.9.2) family.

It is found in the mitochondrion inner membrane. Functionally, probably required for the insertion of integral membrane proteins into the mitochondrial inner membrane. The chain is ALBINO3-like protein 3, mitochondrial (ALB3L3) from Arabidopsis thaliana (Mouse-ear cress).